A 633-amino-acid chain; its full sequence is NBPF family member NBPF3 (633 aa).

Residues 15–52 (RGPDVETSPFGAPRAASHGVGRHQELRDPTVPGPTSSA) are disordered. Residues 127-186 (LRDERLLTEEKLAEELGQAEELRQYKVLVHSQERELTQLREKLQEGRDASRSLNQHLQAL) adopt a coiled-coil conformation. Olduvai domains follow at residues 221–313 (ENDD…CIIP), 314–402 (ENES…ATSP), 405–460 (SREL…LDLD), 461–552 (RMKK…PPCP), and 555–633 (NEVL…IFPH). Basic and acidic residues predominate over residues 316-326 (ESDHEQEEEKG). The tract at residues 316-370 (ESDHEQEEEKGPVSPRNLQESEEEEAPQESWDEGDWTLSIPPDMSASYQSDRSTF) is disordered. A compositionally biased stretch (acidic residues) spans 335–350 (ESEEEEAPQESWDEGD). Positions 463–484 (KKDQEEEEDQGPPCPRLSRELP) are disordered.

Belongs to the NBPF family. Expressed in testis and fetal heart, as well as in non small cell lung carcinoma and neuroblastoma cell line.

Its subcellular location is the cytoplasm. This is NBPF family member NBPF3 from Homo sapiens (Human).